The chain runs to 359 residues: Phospho-N-acetylmuramoyl-pentapeptide-transferase (359 aa).

Transmembrane regions (helical) follow at residues 7-27, 28-48, 82-102, 103-123, 147-167, 179-199, 203-223, 229-249, 256-276, and 337-357; these read RSLTFTSLFFLLVISLIVNSY, IFNSLLIINIFLISSLISLVI, MGGIFIILPFLLLLLIVNNYV, DSVGILLLFFCTISFFIIGFL, ALIAVLFIIFASQSNYINPLI, IVIFPICFLTLVGLSNAVNLT, DGLAAGCSAIVFFGLGTEIFI, LIIYGLISYAMSGLCIGFLKY, IFMGDTGSLTIGAALGSISIL, and IVENFWKVNILLIVLGIVLKI.

This sequence belongs to the glycosyltransferase 4 family. MraY subfamily. The cofactor is Mg(2+).

The protein localises to the cell inner membrane. It catalyses the reaction UDP-N-acetyl-alpha-D-muramoyl-L-alanyl-gamma-D-glutamyl-meso-2,6-diaminopimeloyl-D-alanyl-D-alanine + di-trans,octa-cis-undecaprenyl phosphate = di-trans,octa-cis-undecaprenyl diphospho-N-acetyl-alpha-D-muramoyl-L-alanyl-D-glutamyl-meso-2,6-diaminopimeloyl-D-alanyl-D-alanine + UMP. It participates in cell wall biogenesis; peptidoglycan biosynthesis. Functionally, catalyzes the initial step of the lipid cycle reactions in the biosynthesis of the cell wall peptidoglycan: transfers peptidoglycan precursor phospho-MurNAc-pentapeptide from UDP-MurNAc-pentapeptide onto the lipid carrier undecaprenyl phosphate, yielding undecaprenyl-pyrophosphoryl-MurNAc-pentapeptide, known as lipid I. The sequence is that of Phospho-N-acetylmuramoyl-pentapeptide-transferase from Prochlorococcus marinus subsp. pastoris (strain CCMP1986 / NIES-2087 / MED4).